Consider the following 151-residue polypeptide: Small ribosomal subunit protein uS15y (151 aa).

The protein belongs to the universal ribosomal protein uS15 family.

The chain is Small ribosomal subunit protein uS15y from Oryza sativa subsp. japonica (Rice).